Consider the following 177-residue polypeptide: Pyruvate synthase subunit PorC (177 aa).

As to quaternary structure, heterotetramer of one alpha, one beta, one delta and one gamma chain.

It catalyses the reaction 2 oxidized [2Fe-2S]-[ferredoxin] + pyruvate + CoA = 2 reduced [2Fe-2S]-[ferredoxin] + acetyl-CoA + CO2 + H(+). The sequence is that of Pyruvate synthase subunit PorC (porC) from Methanothermobacter marburgensis (strain ATCC BAA-927 / DSM 2133 / JCM 14651 / NBRC 100331 / OCM 82 / Marburg) (Methanobacterium thermoautotrophicum).